The sequence spans 224 residues: MAGQISPTRSALLASKASLKTANGGADLLKRKRDALIGEFFALVKDALAAREQLSSVSKGAYTSLFGAKAWDSPEAVESLSLAGTGDYAVDMQIESIYGVKVPKINIPERAAQADFSPINVGARTIQASNDFGGVLEAIVKVAATETKLRRIGEEIKKTSRRVNALEQVVIPGIHDDIRFIRSVLDQREREAGYTQKKIKAKIEGKNKEAREAAAATSHGSAAD.

The disordered stretch occupies residues 190–224 (REAGYTQKKIKAKIEGKNKEAREAAAATSHGSAAD). Residues 201–212 (AKIEGKNKEARE) are compositionally biased toward basic and acidic residues. Over residues 213–224 (AAAATSHGSAAD) the composition is skewed to low complexity.

It belongs to the V-ATPase D subunit family.

Produces ATP from ADP in the presence of a proton gradient across the membrane. This chain is V-type ATP synthase subunit D (atpD), found in Deinococcus radiodurans (strain ATCC 13939 / DSM 20539 / JCM 16871 / CCUG 27074 / LMG 4051 / NBRC 15346 / NCIMB 9279 / VKM B-1422 / R1).